The primary structure comprises 301 residues: Pyridoxal 5'-phosphate synthase subunit PdxS (301 aa).

Aspartate 31 is a D-ribose 5-phosphate binding site. Residue lysine 88 is the Schiff-base intermediate with D-ribose 5-phosphate of the active site. A D-ribose 5-phosphate-binding site is contributed by glycine 160. Arginine 172 is a binding site for D-glyceraldehyde 3-phosphate. D-ribose 5-phosphate contacts are provided by residues glycine 221 and 242 to 243 (GS). The segment at 273–301 (EIAKSPGKGMKGQANETLPEEEKLQDRGI) is disordered. Residues 292-301 (EEEKLQDRGI) show a composition bias toward basic and acidic residues.

It belongs to the PdxS/SNZ family. In the presence of PdxT, forms a dodecamer of heterodimers.

It catalyses the reaction aldehydo-D-ribose 5-phosphate + D-glyceraldehyde 3-phosphate + L-glutamine = pyridoxal 5'-phosphate + L-glutamate + phosphate + 3 H2O + H(+). Its pathway is cofactor biosynthesis; pyridoxal 5'-phosphate biosynthesis. Catalyzes the formation of pyridoxal 5'-phosphate from ribose 5-phosphate (RBP), glyceraldehyde 3-phosphate (G3P) and ammonia. The ammonia is provided by the PdxT subunit. Can also use ribulose 5-phosphate and dihydroxyacetone phosphate as substrates, resulting from enzyme-catalyzed isomerization of RBP and G3P, respectively. This chain is Pyridoxal 5'-phosphate synthase subunit PdxS, found in Natronomonas pharaonis (strain ATCC 35678 / DSM 2160 / CIP 103997 / JCM 8858 / NBRC 14720 / NCIMB 2260 / Gabara) (Halobacterium pharaonis).